Here is a 610-residue protein sequence, read N- to C-terminus: Elongation factor 4 (610 aa).

The region spanning 11 to 193 is the tr-type G domain; it reads EKIRNFSIIA…QIVEKVPAPT (183 aa). Residues 23-28 and 140-143 contribute to the GTP site; these read DHGKST and NKID.

Belongs to the TRAFAC class translation factor GTPase superfamily. Classic translation factor GTPase family. LepA subfamily.

It is found in the cell membrane. It carries out the reaction GTP + H2O = GDP + phosphate + H(+). Functionally, required for accurate and efficient protein synthesis under certain stress conditions. May act as a fidelity factor of the translation reaction, by catalyzing a one-codon backward translocation of tRNAs on improperly translocated ribosomes. Back-translocation proceeds from a post-translocation (POST) complex to a pre-translocation (PRE) complex, thus giving elongation factor G a second chance to translocate the tRNAs correctly. Binds to ribosomes in a GTP-dependent manner. The chain is Elongation factor 4 from Streptococcus pyogenes serotype M1.